Here is a 413-residue protein sequence, read N- to C-terminus: BEN domain-containing protein 7 (413 aa).

Glycyl lysine isopeptide (Lys-Gly) (interchain with G-Cter in SUMO2) cross-links involve residues Lys16, Lys56, and Lys85. A compositionally biased stretch (basic and acidic residues) spans 78–88 (GKEGEKLKEEP). Disordered regions lie at residues 78–153 (GKEG…GELP) and 208–243 (RTAV…MEKK). Polar residues-rich tracts occupy residues 99–111 (LNSS…SLHP) and 121–153 (PPQS…GELP). Residues 211–222 (VSRKRNKKKKVP) are compositionally biased toward basic residues. Over residues 223–232 (PKTVEPLTVK) the composition is skewed to low complexity. Lys243 participates in a covalent cross-link: Glycyl lysine isopeptide (Lys-Gly) (interchain with G-Cter in SUMO2). Positions 287-392 (GFDVFMPKSQ…IKLARRRLKR (106 aa)) constitute a BEN domain. Thr324 is subject to Phosphothreonine. Phosphoserine is present on Ser328.

The protein is BEN domain-containing protein 7 (BEND7) of Homo sapiens (Human).